Here is a 314-residue protein sequence, read N- to C-terminus: Olfactory receptor 1E2 (314 aa).

At Met1 to Asn25 the chain is on the extracellular side. N-linked (GlcNAc...) asparagine glycosylation occurs at Asn5. The chain crosses the membrane as a helical span at residues Leu26 to Ile49. At Arg50–Thr57 the chain is on the cytoplasmic side. Residues Pro58 to Pro79 traverse the membrane as a helical segment. Over Lys80–Gln100 the chain is Extracellular. Residues Cys97 and Cys189 are joined by a disulfide bond. A helical transmembrane segment spans residues Met101–Tyr120. The Cytoplasmic segment spans residues Asp121–Met139. The chain crosses the membrane as a helical span at residues Leu140–Leu158. Residues His159–Glu196 lie on the Extracellular side of the membrane. A helical transmembrane segment spans residues Trp197 to Ala219. Over Arg220–Lys236 the chain is Cytoplasmic. A helical transmembrane segment spans residues Ala237 to Leu260. At Cys261–Thr272 the chain is on the extracellular side. N-linked (GlcNAc...) asparagine glycosylation is present at Asn265. A helical transmembrane segment spans residues Val273–Leu292. At Arg293–Leu314 the chain is on the cytoplasmic side.

This sequence belongs to the G-protein coupled receptor 1 family.

It is found in the cell membrane. Functionally, odorant receptor. This is Olfactory receptor 1E2 (OR1E2) from Pan troglodytes (Chimpanzee).